A 282-amino-acid chain; its full sequence is Pantothenate synthetase (282 aa).

26-33 (MGNLHEGH) contributes to the ATP binding site. His33 (proton donor) is an active-site residue. Gln57 is a binding site for (R)-pantoate. Beta-alanine is bound at residue Gln57. ATP is bound at residue 144–147 (GQKD). Position 150 (Gln150) interacts with (R)-pantoate. ATP is bound by residues Leu173 and 181-184 (LSSR).

Belongs to the pantothenate synthetase family. In terms of assembly, homodimer.

It is found in the cytoplasm. The catalysed reaction is (R)-pantoate + beta-alanine + ATP = (R)-pantothenate + AMP + diphosphate + H(+). The protein operates within cofactor biosynthesis; (R)-pantothenate biosynthesis; (R)-pantothenate from (R)-pantoate and beta-alanine: step 1/1. Functionally, catalyzes the condensation of pantoate with beta-alanine in an ATP-dependent reaction via a pantoyl-adenylate intermediate. The polypeptide is Pantothenate synthetase (Albidiferax ferrireducens (strain ATCC BAA-621 / DSM 15236 / T118) (Rhodoferax ferrireducens)).